The sequence spans 348 residues: 3-isopropylmalate dehydrogenase (348 aa).

76 to 87 (GPKWTDPNNRPE) lines the NAD(+) pocket. The substrate site is built by Arg-94, Arg-104, Arg-132, and Asp-217. Residues Asp-217, Asp-241, and Asp-245 each contribute to the Mg(2+) site. 275-287 (GSAPDIAGKNVAN) is a binding site for NAD(+).

It belongs to the isocitrate and isopropylmalate dehydrogenases family. LeuB type 1 subfamily. Homodimer. Requires Mg(2+) as cofactor. It depends on Mn(2+) as a cofactor.

Its subcellular location is the cytoplasm. It catalyses the reaction (2R,3S)-3-isopropylmalate + NAD(+) = 4-methyl-2-oxopentanoate + CO2 + NADH. Its pathway is amino-acid biosynthesis; L-leucine biosynthesis; L-leucine from 3-methyl-2-oxobutanoate: step 3/4. Catalyzes the oxidation of 3-carboxy-2-hydroxy-4-methylpentanoate (3-isopropylmalate) to 3-carboxy-4-methyl-2-oxopentanoate. The product decarboxylates to 4-methyl-2 oxopentanoate. This Staphylococcus aureus (strain NCTC 8325 / PS 47) protein is 3-isopropylmalate dehydrogenase.